Consider the following 333-residue polypeptide: Large ribosomal subunit protein uL3 (333 aa).

Composition is skewed to basic residues over residues Met-1–Arg-10 and Pro-17–Pro-26. The disordered stretch occupies residues Met-1–Arg-29.

The protein belongs to the universal ribosomal protein uL3 family. As to quaternary structure, part of the 50S ribosomal subunit. Forms a cluster with proteins L14 and L24e.

Functionally, one of the primary rRNA binding proteins, it binds directly near the 3'-end of the 23S rRNA, where it nucleates assembly of the 50S subunit. In Methanococcus aeolicus (strain ATCC BAA-1280 / DSM 17508 / OCM 812 / Nankai-3), this protein is Large ribosomal subunit protein uL3.